The sequence spans 283 residues: MCNTPTYCDLGKAAKDVFNKGYGFGMVKIDLKTKSCSGVEFSTSGHAYTDTGKASGNLETKYKVCNYGLTFTQKWNTDNTLGTEISWENKLAEGLKLTLDTIFVPNTGKKSGKLKASYRRDCFSLGSNVDIDFSGPTIYGWAVLAFEGWLAGYQMSFDTAKSKLSQNNFALGYKAADFQLHTHVNDGTEFGGSIYQKVNERIETSINLAWTAGSNNTRFGIAAKYKLDCRTSLSAKVNNASLIGLGYTQTLRPGVKLTLSALIDGKNFNAGGHKVGLGFELEA.

The residue at position 2 (Cys-2) is an N-acetylcysteine. Thr-4 is modified (phosphothreonine). Residues Lys-12, Lys-15, and Lys-20 each carry the N6-acetyllysine modification. A run of 2 beta stranded transmembrane segments spans residues 26–35 (MVKIDLKTKS) and 39–47 (VEFSTSGHA). Residue Lys-53 forms a Glycyl lysine isopeptide (Lys-Gly) (interchain with G-Cter in ubiquitin) linkage. 3 beta stranded membrane passes run 54-64 (ASGNLETKYKV), 69-76 (LTFTQKWN), and 80-89 (TLGTEISWEN). N6-acetyllysine is present on Lys-90. The chain crosses the membrane as a beta stranded span at residues 95 to 104 (LKLTLDTIFV). Residues Lys-109 and Lys-110 each participate in a glycyl lysine isopeptide (Lys-Gly) (interchain with G-Cter in ubiquitin) cross-link. 10 beta stranded membrane passes run 111-120 (SGKLKASYRR), 123-130 (FSLGSNVD), 137-145 (TIYGWAVLA), 150-158 (LAGYQMSFD), 163-175 (KLSQ…GYKA), 178-185 (FQLHTHVN), 189-198 (EFGGSIYQKV), 202-211 (IETSINLAWT), 218-227 (RFGIAAKYKL), and 231-238 (TSLSAKVN). Phosphoserine is present on Ser-241. NAD(+) is bound by residues 242 to 244 (LIG) and 260 to 264 (SALID). Transmembrane regions (beta stranded) follow at residues 242–251 (LIGLGYTQTL) and 254–263 (GVKLTLSALI). Lys-266 is subject to N6-acetyllysine; alternate. Lys-266 participates in a covalent cross-link: Glycyl lysine isopeptide (Lys-Gly) (interchain with G-Cter in ubiquitin); alternate. The beta stranded transmembrane segment at 273-282 (HKVGLGFELE) threads the bilayer.

It belongs to the eukaryotic mitochondrial porin family. As to quaternary structure, interacts with ARMC12 in a TBC1D21-dependent manner. Interacts with MISFA. Post-translationally, ubiquitinated by PRKN during mitophagy, leading to its degradation and enhancement of mitophagy. Deubiquitinated by USP30. In terms of tissue distribution, highest levels of expression detected in testis, less but still abundant expression in heart, kidney, brain, and skeletal muscle.

It localises to the mitochondrion outer membrane. The protein resides in the membrane. It catalyses the reaction chloride(in) = chloride(out). The catalysed reaction is K(+)(in) = K(+)(out). Non-selective voltage-gated ion channel that mediates the transport of anions and cations through the mitochondrion outer membrane and plasma membrane. Forms a high-conducting channel with a stable open state and a voltage-induced closure with a mild preference for anions over cations. Involved in male fertility and sperm mitochondrial sheath formation. The polypeptide is Non-selective voltage-gated ion channel VDAC3 (Mus musculus (Mouse)).